The chain runs to 861 residues: MAGPGPGAVLESPRQLLGRVRFLAEAARSLRAGRPLPAALAFVPREVLYKLYKDPAGPSRVLLPVWEAEGLGLRVGAAGPAPGTGSGPLRAARDSIELRRGACVRTTGEELCNGHGLWVKLTKEQLAEHLGDCGLQEGWLLVCRPAEGGARLVPIDTPNHLQRQQQLFGVDYRPVLRWEQVVDLTYSHRLGSRPQPAEAYAEAVQRLLYVPPTWTYECDEDLIHFLYDHLGKEDENLGSVKQYVESIDVSSYTEEFNVSCLTDSNADTYWESDGSQCQHWVRLTMKKGTIVKKLLLTVDTTDDNFMPKRVVVYGGEGDNLKKLSDVSIDETLIGDVCVLEDMTVHLPIIEIRIVECRDDGIDVRLRGVKIKSSRQRELGLNADLFQPTSLVRYPRLEGTDPEVLYRRAVLLQRFIKILDSVLHHLVPAWDHTLGTFSEIKQVKQFLLLSRQRPGLVAQCLRDSESSKPSFMPRLYINRRLAMEHRACPSRDPACKNAVFTQVYEGLKPSDKYEKPLDYRWPMRYDQWWECKFIAEGIIDQGGGFRDSLADMSEELCPSSADTPVPLPFFVRTANQGNGTGEARDMYVPNPSCRDFAKYEWIGQLMGAALRGKEFLVLALPGFVWKQLSGEEVSWSKDFPAVDSVLVKLLEVMEGMDKETFEFKFGKELTFTTVLSDQQVVELIPGGAGIVVGYGDRSRFIQLVQKARLEESKEQVAAMQAGLLKVVPQAVLDLLTWQELEKKVCGDPEVTVDALRKLTRFEDFEPSDSRVQYFWEALNNFTNEDRSRFLRFVTGRSRLPARIYIYPDKLGYETTDALPESSTCSSTLFLPHYASAKVCEEKLRYAAYNCVAIDTDMSPWEE.

The residue at position 2 (Ala-2) is an N-acetylalanine. The residue at position 12 (Ser-12) is a Phosphoserine. One can recognise a DOC domain in the interval 219–397 (DEDLIHFLYD…TSLVRYPRLE (179 aa)). An HECT domain is found at 512 to 857 (YEKPLDYRWP…NCVAIDTDMS (346 aa)). The active-site Glycyl thioester intermediate is the Cys-823.

As to quaternary structure, interacts with TRIOBP. Interacts with STX8.

Its subcellular location is the cytoplasm. The protein resides in the perinuclear region. The enzyme catalyses S-ubiquitinyl-[E2 ubiquitin-conjugating enzyme]-L-cysteine + [acceptor protein]-L-lysine = [E2 ubiquitin-conjugating enzyme]-L-cysteine + N(6)-ubiquitinyl-[acceptor protein]-L-lysine.. It functions in the pathway protein modification; protein ubiquitination. Its function is as follows. E3 ubiquitin ligases accepts ubiquitin from an E2 ubiquitin-conjugating enzyme in the form of a thioester and then directly transfers the ubiquitin to targeted substrates. Mediates ubiquitination of TRIOBP and its subsequent proteasomal degradation, thus facilitating cell cycle progression by regulating the turn-over of TRIOBP. Mediates also ubiquitination of STX8. This is E3 ubiquitin-protein ligase HECTD3 (HECTD3) from Homo sapiens (Human).